We begin with the raw amino-acid sequence, 489 residues long: Toxin coregulated pilus biosynthesis outer membrane protein C (489 aa).

Positions 1 to 16 are cleaved as a signal peptide; the sequence is MKKTIISTLVIGLVSG. The N-palmitoyl cysteine moiety is linked to residue cysteine 17. A lipid anchor (S-diacylglycerol cysteine) is attached at cysteine 17. 4 consecutive transmembrane segments (helical) span residues 174–190, 294–308, 402–417, and 442–457; these read FSSS…SSGL, AISL…GASY, QLVS…LPTV, and NYIQ…GGGT.

Its subcellular location is the cell membrane. Functionally, involved in TCP pilus biogenesis. This Vibrio cholerae serotype O1 (strain ATCC 39315 / El Tor Inaba N16961) protein is Toxin coregulated pilus biosynthesis outer membrane protein C (tcpC).